Consider the following 145-residue polypeptide: Hemoglobin subunit beta-A (145 aa).

The Globin domain maps to 1–145 (MLTAEEKAAV…VANALAHRYH (145 aa)). The heme b site is built by H62 and H91.

The protein belongs to the globin family. As to quaternary structure, heterotetramer of two alpha chains and two beta chains. As to expression, red blood cells.

In terms of biological role, involved in oxygen transport from the lung to the various peripheral tissues. The sequence is that of Hemoglobin subunit beta-A from Capra hircus (Goat).